Consider the following 340-residue polypeptide: Farnesyl pyrophosphate synthase 1 (340 aa).

Residues Lys-47, Arg-50, and Gln-85 each coordinate isopentenyl diphosphate. Asp-92 and Asp-96 together coordinate Mg(2+). Arg-101 lines the dimethylallyl diphosphate pocket. Position 102 (Arg-102) interacts with isopentenyl diphosphate. Lys-188, Thr-189, Gln-227, Lys-244, and Lys-253 together coordinate dimethylallyl diphosphate.

It belongs to the FPP/GGPP synthase family. The cofactor is Mg(2+). In terms of tissue distribution, mainly expressed in trichomes and flowers, and, to a lower extent, in leaves, roots and stems.

It localises to the cytoplasm. Its subcellular location is the nucleus. The catalysed reaction is isopentenyl diphosphate + dimethylallyl diphosphate = (2E)-geranyl diphosphate + diphosphate. It catalyses the reaction isopentenyl diphosphate + (2E)-geranyl diphosphate = (2E,6E)-farnesyl diphosphate + diphosphate. It participates in isoprenoid biosynthesis; farnesyl diphosphate biosynthesis; farnesyl diphosphate from geranyl diphosphate and isopentenyl diphosphate: step 1/1. It functions in the pathway sesquiterpene biosynthesis. The protein operates within isoprenoid biosynthesis; geranyl diphosphate biosynthesis; geranyl diphosphate from dimethylallyl diphosphate and isopentenyl diphosphate: step 1/1. Functionally, catalyzes the sequential condensation of isopentenyl pyrophosphate with the allylic pyrophosphates, dimethylallyl pyrophosphate, and then with the resultant geranylpyrophosphate to the ultimate product farnesyl pyrophosphate. The protein is Farnesyl pyrophosphate synthase 1 of Cannabis sativa (Hemp).